The primary structure comprises 430 residues: Dihydrolipoyllysine-residue acetyltransferase component of pyruvate dehydrogenase complex (430 aa).

The Lipoyl-binding domain occupies 2 to 77; that stretch reads AFEFRLPDIG…VVGDVIVKID (76 aa). Lys-43 bears the N6-lipoyllysine mark. Residues 80-122 form a disordered region; that stretch reads DAEDMQFKGHDDDSSSKEEPAKEEAPAEQAPVATQTEEVDENR. Residues 84-104 show a composition bias toward basic and acidic residues; sequence MQFKGHDDDSSSKEEPAKEEA. The Peripheral subunit-binding (PSBD) domain occupies 125–162; sequence KAMPSVRKYAREKGVNIKAVSGSGKNGRITKEDVDAYL. The segment at 164 to 199 is disordered; it reads GGAPTASNESAASATSEEVAETPAAPAAVSLEGDFP. A compositionally biased stretch (low complexity) spans 166–193; sequence APTASNESAASATSEEVAETPAAPAAVS. Residue His-401 is part of the active site.

The protein belongs to the 2-oxoacid dehydrogenase family. As to quaternary structure, forms a 24-polypeptide structural core with octahedral symmetry. (R)-lipoate serves as cofactor.

The enzyme catalyses N(6)-[(R)-dihydrolipoyl]-L-lysyl-[protein] + acetyl-CoA = N(6)-[(R)-S(8)-acetyldihydrolipoyl]-L-lysyl-[protein] + CoA. Its function is as follows. The pyruvate dehydrogenase complex catalyzes the overall conversion of pyruvate to acetyl-CoA and CO(2). It contains multiple copies of three enzymatic components: pyruvate dehydrogenase (E1), dihydrolipoamide acetyltransferase (E2) and lipoamide dehydrogenase (E3). This Staphylococcus aureus (strain Mu50 / ATCC 700699) protein is Dihydrolipoyllysine-residue acetyltransferase component of pyruvate dehydrogenase complex (pdhC).